The chain runs to 77 residues: Delta/omega-plectoxin-Pt1a (77 aa).

A signal peptide spans 1–20; that stretch reads MKHLIVAVVLLSALAICTSA. A propeptide spanning residues 21 to 34 is cleaved from the precursor; the sequence is EEEQVNVPFRPEER. Disulfide bonds link Cys38–Cys51, Cys45–Cys57, Cys50–Cys67, Cys54–Cys74, and Cys59–Cys65. Ser73 is lipidated: O-palmitoyl serine. A Cysteine amide modification is found at Cys74.

Belongs to the neurotoxin 02 (plectoxin) family. 01 (Tx3) subfamily. Expressed by the venom gland.

It localises to the secreted. Excitatory toxin that acts on both calcium and sodium (Nav) channels. It preferentially blocks a subset of calcium channels that is apparently not required for neurotransmitter release, it decreases threshold for sodium channel activation and it slows sodium channel inactivation. As it enhances synaptic transmission by prolonging presynaptic release of neurotransmitter, its effects on sodium and calcium channels may act synergistically to sustain the terminal excitability. The polypeptide is Delta/omega-plectoxin-Pt1a (Plectreurys tristis (Spider)).